Consider the following 61-residue polypeptide: Large ribosomal subunit protein uL30 (61 aa).

Belongs to the universal ribosomal protein uL30 family. Part of the 50S ribosomal subunit.

The chain is Large ribosomal subunit protein uL30 from Chlorobium limicola (strain DSM 245 / NBRC 103803 / 6330).